The sequence spans 481 residues: Aspartyl/glutamyl-tRNA(Asn/Gln) amidotransferase subunit B (481 aa).

Belongs to the GatB/GatE family. GatB subfamily. In terms of assembly, heterotrimer of A, B and C subunits.

The catalysed reaction is L-glutamyl-tRNA(Gln) + L-glutamine + ATP + H2O = L-glutaminyl-tRNA(Gln) + L-glutamate + ADP + phosphate + H(+). It carries out the reaction L-aspartyl-tRNA(Asn) + L-glutamine + ATP + H2O = L-asparaginyl-tRNA(Asn) + L-glutamate + ADP + phosphate + 2 H(+). Functionally, allows the formation of correctly charged Asn-tRNA(Asn) or Gln-tRNA(Gln) through the transamidation of misacylated Asp-tRNA(Asn) or Glu-tRNA(Gln) in organisms which lack either or both of asparaginyl-tRNA or glutaminyl-tRNA synthetases. The reaction takes place in the presence of glutamine and ATP through an activated phospho-Asp-tRNA(Asn) or phospho-Glu-tRNA(Gln). This Pseudomonas entomophila (strain L48) protein is Aspartyl/glutamyl-tRNA(Asn/Gln) amidotransferase subunit B.